Here is a 75-residue protein sequence, read N- to C-terminus: MARITVEDCQERVDNRFLLVQMAIKRVHQYREGYEALVDSRNKEVVTALREIAAGKVLPDEEARYVETEEDFRAE.

Belongs to the RNA polymerase subunit omega family. In terms of assembly, the RNAP catalytic core consists of 2 alpha, 1 beta, 1 beta' and 1 omega subunit. When a sigma factor is associated with the core the holoenzyme is formed, which can initiate transcription.

It carries out the reaction RNA(n) + a ribonucleoside 5'-triphosphate = RNA(n+1) + diphosphate. Its function is as follows. Promotes RNA polymerase assembly. Latches the N- and C-terminal regions of the beta' subunit thereby facilitating its interaction with the beta and alpha subunits. The sequence is that of DNA-directed RNA polymerase subunit omega from Nitratidesulfovibrio vulgaris (strain DSM 19637 / Miyazaki F) (Desulfovibrio vulgaris).